We begin with the raw amino-acid sequence, 237 residues long: tRNA (guanine-N(7)-)-methyltransferase (237 aa).

S-adenosyl-L-methionine-binding residues include D35, E60, N87, and D113. The active site involves D113. Substrate-binding residues include K117 and D149.

It belongs to the class I-like SAM-binding methyltransferase superfamily. TrmB family.

It catalyses the reaction guanosine(46) in tRNA + S-adenosyl-L-methionine = N(7)-methylguanosine(46) in tRNA + S-adenosyl-L-homocysteine. The protein operates within tRNA modification; N(7)-methylguanine-tRNA biosynthesis. In terms of biological role, catalyzes the formation of N(7)-methylguanine at position 46 (m7G46) in tRNA. In Synechococcus sp. (strain WH7803), this protein is tRNA (guanine-N(7)-)-methyltransferase.